Consider the following 378-residue polypeptide: Spermidine/putrescine import ATP-binding protein PotA (378 aa).

Residues 18 to 248 form the ABC transporter domain; the sequence is VQLAGIRKCF…PKNLFVAGFI (231 aa). ATP is bound at residue 50–57; the sequence is GPSGCGKT.

This sequence belongs to the ABC transporter superfamily. Spermidine/putrescine importer (TC 3.A.1.11.1) family. The complex is composed of two ATP-binding proteins (PotA), two transmembrane proteins (PotB and PotC) and a solute-binding protein (PotD).

The protein resides in the cell inner membrane. It catalyses the reaction ATP + H2O + polyamine-[polyamine-binding protein]Side 1 = ADP + phosphate + polyamineSide 2 + [polyamine-binding protein]Side 1.. Its function is as follows. Part of the ABC transporter complex PotABCD involved in spermidine/putrescine import. Responsible for energy coupling to the transport system. This chain is Spermidine/putrescine import ATP-binding protein PotA, found in Escherichia coli O1:K1 / APEC.